A 206-amino-acid polypeptide reads, in one-letter code: Small ribosomal subunit protein uS3 (206 aa).

The region spanning 39–107 is the KH type-2 domain; that stretch reads IRSYINESFK…SVEVNVVGIK (69 aa).

The protein belongs to the universal ribosomal protein uS3 family. Part of the 30S ribosomal subunit. Forms a tight complex with proteins S10 and S14.

Its function is as follows. Binds the lower part of the 30S subunit head. Binds mRNA in the 70S ribosome, positioning it for translation. This is Small ribosomal subunit protein uS3 from Wolbachia sp. subsp. Brugia malayi (strain TRS).